The primary structure comprises 936 residues: Sine oculis-binding protein homolog A (936 aa).

Positions 1-14 (MAEMEKEGRPPESK) are enriched in basic and acidic residues. Disordered stretches follow at residues 1 to 46 (MAEM…GQAG) and 108 to 151 (ASTL…HGGL). Positions 108 to 144 (ASTLENSSGSPPHANSSGSTPTSRNGVTAESSVNPSS) are enriched in polar residues. 2 consecutive FCS-type zinc fingers follow at residues 169–207 (EDSS…KCFA) and 247–287 (LKTN…KCLN). Disordered regions lie at residues 311-330 (LPTS…LTPE), 336-424 (LSEL…VMTP), 486-511 (SPHL…HPAA), 574-632 (NPQR…KQTE), 697-727 (PPPA…DTYS), and 842-877 (DSAG…EDHA). Residues 349–382 (GATIAGPSGSTSGSPSEAGTVCSSSSSSSSSSSS) are compositionally biased toward low complexity. The span at 395-404 (SLPPPHPPPI) shows a compositional bias: pro residues. Composition is skewed to polar residues over residues 617–632 (PPNS…KQTE), 708–717 (DGSTSISTGT), and 850–859 (NDQSAITTGT).

The protein belongs to the SOBP family.

Functionally, implicated in development of the cochlea. This Danio rerio (Zebrafish) protein is Sine oculis-binding protein homolog A (sobpa).